The chain runs to 75 residues: Metallothionein-like protein 1 (75 aa).

This sequence belongs to the metallothionein superfamily. Type 15 family.

In terms of biological role, metallothioneins have a high content of cysteine residues that bind various heavy metals. The polypeptide is Metallothionein-like protein 1 (Cicer arietinum (Chickpea)).